A 397-amino-acid polypeptide reads, in one-letter code: GTPase Obg (397 aa).

The 159-residue stretch at 1–159 (MKFVDEAEIR…RMLKLELMLL (159 aa)) folds into the Obg domain. The tract at residues 22-44 (SFRREKYVPDGGPDGGDGGDGGS) is disordered. The span at 33-43 (GPDGGDGGDGG) shows a compositional bias: gly residues. The region spanning 160-333 (ADVGLLGMPN…LCIKVMDFIE (174 aa)) is the OBG-type G domain. GTP contacts are provided by residues 166-173 (GMPNAGKS), 191-195 (FTTLV), 213-216 (DIPG), 283-286 (NKVD), and 314-316 (SAV). The Mg(2+) site is built by Ser-173 and Thr-193. Residues 359 to 389 (TVENYEDDDDFDDDDDDDFDGDDDDDFDGDD) form a disordered region. The segment covering 361–389 (ENYEDDDDFDDDDDDDFDGDDDDDFDGDD) has biased composition (acidic residues).

The protein belongs to the TRAFAC class OBG-HflX-like GTPase superfamily. OBG GTPase family. Monomer. Requires Mg(2+) as cofactor.

It localises to the cytoplasm. Its function is as follows. An essential GTPase which binds GTP, GDP and possibly (p)ppGpp with moderate affinity, with high nucleotide exchange rates and a fairly low GTP hydrolysis rate. Plays a role in control of the cell cycle, stress response, ribosome biogenesis and in those bacteria that undergo differentiation, in morphogenesis control. This chain is GTPase Obg, found in Pseudoalteromonas atlantica (strain T6c / ATCC BAA-1087).